Reading from the N-terminus, the 316-residue chain is Transaldolase 1 (316 aa).

K131 functions as the Schiff-base intermediate with substrate in the catalytic mechanism.

Belongs to the transaldolase family. Type 1 subfamily. As to quaternary structure, homodimer.

It is found in the cytoplasm. The enzyme catalyses D-sedoheptulose 7-phosphate + D-glyceraldehyde 3-phosphate = D-erythrose 4-phosphate + beta-D-fructose 6-phosphate. The protein operates within carbohydrate degradation; pentose phosphate pathway; D-glyceraldehyde 3-phosphate and beta-D-fructose 6-phosphate from D-ribose 5-phosphate and D-xylulose 5-phosphate (non-oxidative stage): step 2/3. Transaldolase is important for the balance of metabolites in the pentose-phosphate pathway. This is Transaldolase 1 from Pectobacterium atrosepticum (strain SCRI 1043 / ATCC BAA-672) (Erwinia carotovora subsp. atroseptica).